We begin with the raw amino-acid sequence, 296 residues long: Cytidine deaminase (296 aa).

CMP/dCMP-type deaminase domains follow at residues Asp-48–Val-168 and Gln-187–Glu-296. Residue Asn-89 to Glu-91 participates in substrate binding. His-102 is a binding site for Zn(2+). The active-site Proton donor is the Glu-104. 2 residues coordinate Zn(2+): Cys-129 and Cys-132.

Belongs to the cytidine and deoxycytidylate deaminase family. Homodimer. Zn(2+) is required as a cofactor.

It carries out the reaction cytidine + H2O + H(+) = uridine + NH4(+). It catalyses the reaction 2'-deoxycytidine + H2O + H(+) = 2'-deoxyuridine + NH4(+). Functionally, this enzyme scavenges exogenous and endogenous cytidine and 2'-deoxycytidine for UMP synthesis. The polypeptide is Cytidine deaminase (Pectobacterium atrosepticum (strain SCRI 1043 / ATCC BAA-672) (Erwinia carotovora subsp. atroseptica)).